Here is a 196-residue protein sequence, read N- to C-terminus: 3-isopropylmalate dehydratase small subunit (196 aa).

This sequence belongs to the LeuD family. LeuD type 1 subfamily. In terms of assembly, heterodimer of LeuC and LeuD.

The enzyme catalyses (2R,3S)-3-isopropylmalate = (2S)-2-isopropylmalate. Its pathway is amino-acid biosynthesis; L-leucine biosynthesis; L-leucine from 3-methyl-2-oxobutanoate: step 2/4. Its function is as follows. Catalyzes the isomerization between 2-isopropylmalate and 3-isopropylmalate, via the formation of 2-isopropylmaleate. The chain is 3-isopropylmalate dehydratase small subunit from Streptococcus sanguinis (strain SK36).